A 488-amino-acid chain; its full sequence is GTPase Der (488 aa).

EngA-type G domains follow at residues 3–166 (PVVA…AEAM) and 199–372 (IKLA…DSAT). GTP contacts are provided by residues 9–16 (GRPNVGKS), 56–60 (DTGGI), 118–121 (NKID), 205–212 (GKPNVGKS), 252–256 (DTAGV), and 317–320 (NKWD). Residues 373-457 (RRVSTSMLTR…PIQLRFQEGD (85 aa)) form the KH-like domain.

It belongs to the TRAFAC class TrmE-Era-EngA-EngB-Septin-like GTPase superfamily. EngA (Der) GTPase family. As to quaternary structure, associates with the 50S ribosomal subunit.

GTPase that plays an essential role in the late steps of ribosome biogenesis. This chain is GTPase Der, found in Shewanella sp. (strain ANA-3).